The sequence spans 121 residues: Large ribosomal subunit protein uL22 (121 aa).

It belongs to the universal ribosomal protein uL22 family. In terms of assembly, part of the 50S ribosomal subunit.

In terms of biological role, this protein binds specifically to 23S rRNA; its binding is stimulated by other ribosomal proteins, e.g. L4, L17, and L20. It is important during the early stages of 50S assembly. It makes multiple contacts with different domains of the 23S rRNA in the assembled 50S subunit and ribosome. Its function is as follows. The globular domain of the protein is located near the polypeptide exit tunnel on the outside of the subunit, while an extended beta-hairpin is found that lines the wall of the exit tunnel in the center of the 70S ribosome. This Parasynechococcus marenigrum (strain WH8102) protein is Large ribosomal subunit protein uL22.